The sequence spans 831 residues: Cadherin-related family member 5 (831 aa).

An N-terminal signal peptide occupies residues 1–28 (MGAPALLWPSLLLPWLTVLFGQPPGTLA). Over 29–641 (QTQVCSVNQT…GQRFSTVDMA (613 aa)) the chain is Extracellular. Residues asparagine 36, asparagine 45, asparagine 84, asparagine 135, asparagine 143, asparagine 173, asparagine 201, asparagine 287, asparagine 311, asparagine 408, and asparagine 475 are each glycosylated (N-linked (GlcNAc...) asparagine). Cadherin domains lie at 53 to 125 (VNIF…DNAP), 128 to 240 (SFEI…TPWF), 252 to 357 (IHAQ…PLQF), and 358 to 459 (SQSL…ERER). A disordered region spans residues 452–632 (IQVSERERTP…STGAGEQGDG (181 aa)). Positions 473–491 (SSNTTMEAPLTSGTSQRPA) are enriched in polar residues. Residues 505–540 (GGTTLRPPTPASSIPGGSPTLGTSTSPQTTTPGGDS) show a composition bias toward low complexity. Polar residues predominate over residues 541–554 (AQTPKPGTSHPTAP). A run of 2 repeats spans residues 541–571 (AQTP…RSDS) and 572–602 (TQTP…SGSS). The tract at residues 541–614 (AQTPKPGTSH…TPKPGTSQST (74 aa)) is 3 X 31 AA approximate tandem repeats. A compositionally biased stretch (low complexity) spans 555–572 (TSRTSTSLMTTSSRSDST). 2 stretches are compositionally biased toward polar residues: residues 573 to 582 (QTPKPGTSQP) and 589 to 623 (ASTS…SLPS). One copy of the 3; truncated repeat lies at 605 to 614 (TPKPGTSQST). A helical membrane pass occupies residues 642–662 (VLGGVLGALLLLALICLVILV). The Cytoplasmic segment spans residues 663 to 831 (HKHYRHRLAC…FGVDADNTYI (169 aa)). Residues 663–831 (HKHYRHRLAC…FGVDADNTYI (169 aa)) form a mediates interaction with USH1C and MYO7B and is required for proper localization to microvilli tips and function in microvilli organization region. Disordered regions lie at residues 675–774 (GKAS…GGYK) and 793–831 (EPTA…NTYI). Phosphoserine occurs at positions 699, 721, and 725. The span at 716–738 (PLRPPSPMSSSPTPPSSTPPSPQ) shows a compositional bias: pro residues. Threonine 728 bears the Phosphothreonine mark. 2 positions are modified to phosphoserine: serine 736 and serine 753. The segment covering 761–771 (LTKERRPEGEG) has biased composition (basic and acidic residues). Position 795 is a phosphothreonine (threonine 795). A compositionally biased stretch (low complexity) spans 797-807 (DVDSASASGSE). Phosphoserine occurs at positions 802, 804, and 806.

As to quaternary structure, part of the IMAC/intermicrovillar adhesion complex/intermicrovillar tip-link complex composed of ANKS4B, MYO7B, USH1C, CDHR2 and CDHR5. Interacts (via cytoplasmic domain) with USH1C and MYO7B; required for proper localization of CDHR5 to microvilli tips and its function in brush border differentiation. Post-translationally, N- and O-glycosylated.

It localises to the apical cell membrane. It is found in the cell projection. The protein localises to the microvillus membrane. Functionally, intermicrovillar adhesion molecule that forms, via its extracellular domain, calcium-dependent heterophilic complexes with CDHR2 on adjacent microvilli. Thereby, controls the packing of microvilli at the apical membrane of epithelial cells. Through its cytoplasmic domain, interacts with microvillus cytoplasmic proteins to form the intermicrovillar adhesion complex/IMAC. This complex plays a central role in microvilli and epithelial brush border differentiation. In Mus musculus (Mouse), this protein is Cadherin-related family member 5.